We begin with the raw amino-acid sequence, 310 residues long: Phosphoribosylaminoimidazole-succinocarboxamide synthase (310 aa).

The protein belongs to the SAICAR synthetase family.

The enzyme catalyses 5-amino-1-(5-phospho-D-ribosyl)imidazole-4-carboxylate + L-aspartate + ATP = (2S)-2-[5-amino-1-(5-phospho-beta-D-ribosyl)imidazole-4-carboxamido]succinate + ADP + phosphate + 2 H(+). The protein operates within purine metabolism; IMP biosynthesis via de novo pathway; 5-amino-1-(5-phospho-D-ribosyl)imidazole-4-carboxamide from 5-amino-1-(5-phospho-D-ribosyl)imidazole-4-carboxylate: step 1/2. The polypeptide is Phosphoribosylaminoimidazole-succinocarboxamide synthase (Xanthomonas axonopodis pv. citri (strain 306)).